The primary structure comprises 465 residues: uncharacterized protein (465 aa).

11 helical membrane-spanning segments follow: residues 19-39 (VLGP…GEYM), 50-70 (MIAG…VAMI), 91-111 (IVGP…YTML), 140-160 (FIVL…LATL), 164-184 (LVIT…VQFG), 201-221 (PYGW…YLGI), 244-264 (AGIM…SGLM), 288-308 (LMVL…NGCI), 342-362 (IVFL…DQVV), 363-383 (TFSI…MVMF), and 403-423 (LPTV…FLGY).

It belongs to the amino acid-polyamine-organocation (APC) superfamily.

It localises to the cell membrane. Functionally, probable amino-acid or metabolite transport protein. This is an uncharacterized protein from Rhizobium meliloti (strain 1021) (Ensifer meliloti).